We begin with the raw amino-acid sequence, 360 residues long: DNA integrity scanning protein DisA (360 aa).

Positions 9–147 (DNDLMDILNI…NNIKYVLRDS (139 aa)) constitute a DAC domain. ATP contacts are provided by residues Gly-76, Leu-94, and 107-111 (TRHRT).

The protein belongs to the DisA family. Homooctamer. Requires Mg(2+) as cofactor.

The catalysed reaction is 2 ATP = 3',3'-c-di-AMP + 2 diphosphate. In terms of biological role, participates in a DNA-damage check-point that is active prior to asymmetric division when DNA is damaged. DisA forms globular foci that rapidly scan along the chromosomes during sporulation, searching for lesions. When a lesion is present, DisA pauses at the lesion site. This triggers a cellular response that culminates in a temporary block in sporulation initiation. Its function is as follows. Also has diadenylate cyclase activity, catalyzing the condensation of 2 ATP molecules into cyclic di-AMP (c-di-AMP). c-di-AMP acts as a signaling molecule that couples DNA integrity with progression of sporulation. The rise in c-di-AMP level generated by DisA while scanning the chromosome, operates as a positive signal that advances sporulation; upon encountering a lesion, the DisA focus arrests at the damaged site and halts c-di-AMP synthesis. The protein is DNA integrity scanning protein DisA of Clostridium tetani (strain Massachusetts / E88).